The primary structure comprises 45 residues: Amphipathic peptide Hj0164 (45 aa).

Residues 1–23 form the signal peptide; sequence MKSQAFFLLFLVVLLLATTQSEA. A Phenylalanine amide modification is found at phenylalanine 33. The propeptide occupies 37-45; sequence SLRDVDTMK.

The protein belongs to the non-disulfide-bridged peptide (NDBP) superfamily. Short antimicrobial peptide (group 4) family. As to expression, expressed by the venom gland.

The protein localises to the secreted. It is found in the target cell membrane. Functionally, amphipathic peptide that shows antibacterial activities. In Hottentotta judaicus (Black scorpion), this protein is Amphipathic peptide Hj0164.